A 214-amino-acid chain; its full sequence is dITP/XTP pyrophosphatase (214 aa).

Residue 13 to 18 participates in substrate binding; it reads SHNKGK. Residues E45 and D74 each coordinate Mg(2+). The Proton acceptor role is filled by D74. Residues S75, 163-166, K186, and 199-200 each bind substrate; these read FGYD and HR.

It belongs to the HAM1 NTPase family. As to quaternary structure, homodimer. Mg(2+) is required as a cofactor.

The catalysed reaction is XTP + H2O = XMP + diphosphate + H(+). It catalyses the reaction dITP + H2O = dIMP + diphosphate + H(+). It carries out the reaction ITP + H2O = IMP + diphosphate + H(+). Functionally, pyrophosphatase that catalyzes the hydrolysis of nucleoside triphosphates to their monophosphate derivatives, with a high preference for the non-canonical purine nucleotides XTP (xanthosine triphosphate), dITP (deoxyinosine triphosphate) and ITP. Seems to function as a house-cleaning enzyme that removes non-canonical purine nucleotides from the nucleotide pool, thus preventing their incorporation into DNA/RNA and avoiding chromosomal lesions. In Agrobacterium fabrum (strain C58 / ATCC 33970) (Agrobacterium tumefaciens (strain C58)), this protein is dITP/XTP pyrophosphatase.